The sequence spans 511 residues: Glucans biosynthesis protein G (511 aa).

The first 22 residues, 1 to 22, serve as a signal peptide directing secretion; the sequence is MMKMRWLSAAVMLTLYTSSSWA.

Belongs to the OpgD/OpgG family.

The protein resides in the periplasm. Its pathway is glycan metabolism; osmoregulated periplasmic glucan (OPG) biosynthesis. Involved in the biosynthesis of osmoregulated periplasmic glucans (OPGs). This chain is Glucans biosynthesis protein G, found in Shigella dysenteriae serotype 1 (strain Sd197).